Consider the following 26-residue polypeptide: Oxyopinin-3b (26 aa).

As to expression, expressed by the venom gland.

It localises to the secreted. Functionally, may have cytolytic and antimicrobial activity. The protein is Oxyopinin-3b of Oxyopes takobius (Lynx spider).